The primary structure comprises 356 residues: MTLQSDLPATVRPLGPVMLDVAGFALTEEERERLLDPLVGGVILFARNFRDSEQLQALTAEIHALRSPALIIAVDHEGGRVQRFRTDGFTRIPSMRCLGRLWERDHVAALESARCAGYVLAAELLAHGVDLSFTPVLDLDYGCSRVVGDRAFHRDPLVVAALAQSLVSGMADAGMGCVGKHFPGHGYAEADSHVEIPVDEREFDAIWTEDIAPYRHRLGRQLAGVMPAHVIYPRVDPNPAGFSRFWLQDILRGRVGFGGVIFSDDLTMEGATVVGDILARARAAFGAGCDVVLVCNRPDLAVDLLDRWAPDIAPESRARIEALRSRPQAADPFALELHPVYRQARDVVAGLVEDTA.

Substrate contacts are provided by residues aspartate 75, arginine 83, arginine 150, and 180 to 181; that span reads KH. Histidine 193 functions as the Proton donor/acceptor in the catalytic mechanism. Aspartate 264 functions as the Nucleophile in the catalytic mechanism.

It belongs to the glycosyl hydrolase 3 family. NagZ subfamily.

It localises to the cytoplasm. It catalyses the reaction Hydrolysis of terminal non-reducing N-acetyl-D-hexosamine residues in N-acetyl-beta-D-hexosaminides.. Its pathway is cell wall biogenesis; peptidoglycan recycling. Functionally, plays a role in peptidoglycan recycling by cleaving the terminal beta-1,4-linked N-acetylglucosamine (GlcNAc) from peptide-linked peptidoglycan fragments, giving rise to free GlcNAc, anhydro-N-acetylmuramic acid and anhydro-N-acetylmuramic acid-linked peptides. The sequence is that of Beta-hexosaminidase from Aromatoleum aromaticum (strain DSM 19018 / LMG 30748 / EbN1) (Azoarcus sp. (strain EbN1)).